The sequence spans 162 residues: Nucleotide-binding protein SCO4614 (162 aa).

This sequence belongs to the YajQ family.

It is found in the cytoplasm. The protein resides in the nucleoid. Nucleotide-binding protein. In Streptomyces coelicolor (strain ATCC BAA-471 / A3(2) / M145), this protein is Nucleotide-binding protein SCO4614.